The following is a 3391-amino-acid chain: Genome polyprotein (3391 aa).

Residues 1–15 (MNDQRKKAKNTPFNM) are interaction with host EXOC1. The Cytoplasmic portion of the chain corresponds to 1-101 (MNDQRKKAKN…LNILNRRRRS (101 aa)). The hydrophobic; homodimerization of capsid protein C stretch occupies residues 37 to 72 (MLQGRGPLKLYMALVAFLRFLTIPPTAGILKRWGTI). Positions 101-114 (SAGMIIMLIPTVMA) are cleaved as a propeptide — ER anchor for the capsid protein C, removed in mature form by serine protease NS3. The chain crosses the membrane as a helical span at residues 102-119 (AGMIIMLIPTVMAFHLTT). The Extracellular portion of the chain corresponds to 120 to 242 (RNGEPHMIVS…HVQRIETWIL (123 aa)). N183 carries N-linked (GlcNAc...) asparagine; by host glycosylation. Residues 243–260 (RHPGFTMMAAILAYTIGT) traverse the membrane as a helical segment. Position 261 (T261) is a topological domain, cytoplasmic. Residues 262-280 (HFQRALIFILLTAVTPSMT) traverse the membrane as a helical segment. The Extracellular segment spans residues 281 to 725 (MRCIGMSNRD…LHQVFGAIYG (445 aa)). 4 disulfides stabilise this stretch: C283/C310, C340/C401, C354/C385, and C372/C396. N-linked (GlcNAc...) asparagine; by host glycosylation is present at N347. Positions 378–391 (DRGWGNGCGLFGKG) are fusion peptide. The N-linked (GlcNAc...) asparagine; by host glycan is linked to N433. Cystine bridges form between C465/C565 and C582/C613. The helical transmembrane segment at 726 to 746 (AAFSGVSWTMKILIGVIITWI) threads the bilayer. The Cytoplasmic segment spans residues 747–752 (GMNSRS). A helical transmembrane segment spans residues 753 to 773 (TSLSVTLVLVGIVTLYLGVMV). Over 774-1195 (QADSGCVVSW…MVGATMTDDI (422 aa)) the chain is Extracellular. 6 disulfides stabilise this stretch: C779/C790, C830/C918, C954/C998, C1055/C1104, C1066/C1088, and C1087/C1091. 2 N-linked (GlcNAc...) asparagine; by host glycosylation sites follow: N905 and N982. N1134 and N1174 each carry an N-linked (GlcNAc...) asparagine; by host glycan. A helical membrane pass occupies residues 1196-1220 (GMGVTYLALLAAFKVRPTFAAGLLL). Residues 1221–1226 (RKLTSK) are Cytoplasmic-facing. Residues 1227 to 1245 (ALMMTTIGIVLSSQSTTPE) form a helical membrane-spanning segment. The Lumenal segment spans residues 1246 to 1269 (TILELTDALALGMMVLKMVRNMEK). Residues 1270 to 1290 (YQLAVTIMAILCVPNAVILQN) traverse the membrane as a helical segment. Residue A1291 is a topological domain, cytoplasmic. The helical transmembrane segment at 1292–1310 (WKVSCTILAVVSVSPLFLT) threads the bilayer. Residues 1311–1317 (SSQQKTD) lie on the Lumenal side of the membrane. A helical membrane pass occupies residues 1318 to 1338 (WIPLALTIKGLNPTAIFLTTL). At 1339 to 1346 (SRTSKKRS) the chain is on the cytoplasmic side. The chain crosses the membrane as a helical span at residues 1347–1367 (WPLNEAIMAVGMVSILASSLL). The Lumenal segment spans residues 1368 to 1370 (KND). Residues 1371–1391 (IPMTGPLVAGGPLTVCYVLTG) form a helical membrane-spanning segment. At 1392–1447 (RSADLELERAADVKWEDQAEISGSSPILSITISEDGSMSIKNEEEEQTLTILIRTG) the chain is on the cytoplasmic side. The interacts with and activates NS3 protease stretch occupies residues 1398–1437 (LERAADVKWEDQAEISGSSPILSITISEDGSMSIKNEEEE). Positions 1448 to 1468 (LLVISGLFPVSIPITAAAWYL) form an intramembrane region, helical. The Cytoplasmic portion of the chain corresponds to 1469–2147 (WEVKKQRAGV…LSELPETLET (679 aa)). A Peptidase S7 domain is found at 1476 to 1653 (AGVLWDVPSP…EKSIEDNPEI (178 aa)). Catalysis depends on charge relay system; for serine protease NS3 activity residues H1526, D1550, and S1610. A Helicase ATP-binding domain is found at 1655–1811 (DDIFRKRRLT…QSNAPIIDEE (157 aa)). Residues 1659 to 1662 (RKRR) are important for RNA-binding. ATP is bound at residue 1668 to 1675 (LHPGAGKT). Positions 1759–1762 (DEAH) match the DEAH box motif. The Helicase C-terminal domain maps to 1821–1988 (SGHEWVTDFK…IIPSMFEPER (168 aa)). At K1863 the chain carries N6-acetyllysine; by host. A helical transmembrane segment spans residues 2148–2168 (LLLLTLLATVTGGILLFLMSG). Residues 2169–2170 (RG) lie on the Lumenal side of the membrane. An intramembrane region (helical) is located at residues 2171–2191 (IGKMTLGMCCIITASILLWYA). Residue Q2192 is a topological domain, lumenal. The helical transmembrane segment at 2193 to 2213 (IQPHWIAASIILEFFLIVLLI) threads the bilayer. Over 2214 to 2228 (PEPEKQRTPQDNQLT) the chain is Cytoplasmic. A helical transmembrane segment spans residues 2229–2249 (YVVIAILTVVAATMANEMGFL). The Lumenal segment spans residues 2250 to 2274 (EKTKKDLGLGSIATQQPESNILDID). The segment at residues 2275–2295 (LRPASAWTLYAVATTFVTPML) is an intramembrane region (helical). The Lumenal portion of the chain corresponds to 2296–2316 (RHSIENSSVNVSLTAIANQAT). N2301 and N2305 each carry an N-linked (GlcNAc...) asparagine; by host glycan. The helical intramembrane region spans 2317–2337 (VLMGLGKGWPLSKMDIGVPLL). Over 2338–2347 (AIGCYSQVNP) the chain is Lumenal. Residues 2348 to 2368 (TTLTAALFLLVAHYAIIGPAL) form a helical membrane-spanning segment. The Cytoplasmic segment spans residues 2369–2413 (QAKASREAQKRAAAGIMKNPTVDGITVIDLDPIPYDPKFEKQLGQ). Residues 2414-2434 (VMLLVLCVTQVLMMRTTWALC) traverse the membrane as a helical segment. At 2435–2459 (EVLTLATGPISTLWEGNPGRFWNTT) the chain is on the lumenal side. N2457 carries N-linked (GlcNAc...) asparagine; by host glycosylation. Residues 2460 to 2480 (IAVSMANIFRGSYLAGAGLLF) traverse the membrane as a helical segment. The Cytoplasmic portion of the chain corresponds to 2481–3391 (SIMKNTTNAR…REEEEAGVLW (911 aa)). Residues 2493–2755 (TGNIGETLGE…DVDLGSGTRN (263 aa)) enclose the mRNA cap 0-1 NS5-type MT domain. S2547 serves as a coordination point for S-adenosyl-L-methionine. Residue S2547 is modified to Phosphoserine. K2552 acts as the For 2'-O-MTase activity in catalysis. Positions 2568–2571 (VVDL) match the SUMO-interacting motif motif. S-adenosyl-L-methionine-binding residues include G2577, W2578, T2595, K2596, D2622, and V2623. D2637 acts as the For 2'-O-MTase activity in catalysis. Residue I2638 coordinates S-adenosyl-L-methionine. Catalysis depends on for 2'-O-MTase activity residues K2672 and E2708. Y2710 is a binding site for S-adenosyl-L-methionine. Positions 2929, 2933, 2938, and 2941 each coordinate Zn(2+). The RdRp catalytic domain maps to 3020–3169 (AMYADDTAGW…PLDDRLPSAL (150 aa)). Residues H3203, C3219, and C3338 each coordinate Zn(2+).

The protein in the N-terminal section; belongs to the class I-like SAM-binding methyltransferase superfamily. mRNA cap 0-1 NS5-type methyltransferase family. Homodimer. Interacts (via N-terminus) with host EXOC1 (via C-terminus); this interaction results in EXOC1 degradation through the proteasome degradation pathway. As to quaternary structure, forms heterodimers with envelope protein E in the endoplasmic reticulum and Golgi. In terms of assembly, homodimer; in the endoplasmic reticulum and Golgi. Interacts with protein prM. Interacts with non-structural protein 1. Homodimer; Homohexamer when secreted. Interacts with envelope protein E. Interacts with host PRKAA1. As to quaternary structure, interacts (via N-terminus) with serine protease NS3. In terms of assembly, forms a heterodimer with serine protease NS3. May form homooligomers. Forms a heterodimer with NS2B. Interacts with NS4B. Interacts with unphosphorylated RNA-directed RNA polymerase NS5; this interaction stimulates RNA-directed RNA polymerase NS5 guanylyltransferase activity. Interacts with host SHFL. As to quaternary structure, interacts with host MAVS; this interaction inhibits the synthesis of IFN-beta. Interacts with host SHFL. Interacts with host AUP1; the interaction occurs in the presence of Dengue virus NS4B and induces lipophagy which facilitates production of virus progeny particles. May interact with host SRPRA and SEC61G. In terms of assembly, interacts with serine protease NS3. Homodimer. Interacts with host STAT2; this interaction inhibits the phosphorylation of the latter, and, when all viral proteins are present (polyprotein), targets STAT2 for degradation. Interacts with serine protease NS3. Interacts with host PAF1 complex; the interaction may prevent the recruitment of the PAF1 complex to interferon-responsive genes, and thus reduces the immune response. Post-translationally, specific enzymatic cleavages in vivo yield mature proteins. Cleavages in the lumen of endoplasmic reticulum are performed by host signal peptidase, whereas cleavages in the cytoplasmic side are performed by serine protease NS3. Signal cleavage at the 2K-4B site requires a prior NS3 protease-mediated cleavage at the 4A-2K site. Cleaved in post-Golgi vesicles by a host furin, releasing the mature small envelope protein M, and peptide pr. This cleavage is incomplete as up to 30% of viral particles still carry uncleaved prM. In terms of processing, N-glycosylated. Post-translationally, N-glycosylated. The excreted form is glycosylated and this is required for efficient secretion of the protein from infected cells. Acetylated by host KAT5. Acetylation modulates NS3 RNA-binding and unwinding activities and plays an important positive role for viral replication. In terms of processing, sumoylation of RNA-directed RNA polymerase NS5 increases NS5 protein stability allowing proper viral RNA replication. Post-translationally, phosphorylated on serines residues. This phosphorylation may trigger NS5 nuclear localization.

It is found in the virion. It localises to the host nucleus. The protein resides in the host cytoplasm. Its subcellular location is the host perinuclear region. The protein localises to the secreted. It is found in the virion membrane. It localises to the host endoplasmic reticulum membrane. The protein resides in the host mitochondrion. It catalyses the reaction Selective hydrolysis of -Xaa-Xaa-|-Yaa- bonds in which each of the Xaa can be either Arg or Lys and Yaa can be either Ser or Ala.. It carries out the reaction RNA(n) + a ribonucleoside 5'-triphosphate = RNA(n+1) + diphosphate. The enzyme catalyses a ribonucleoside 5'-triphosphate + H2O = a ribonucleoside 5'-diphosphate + phosphate + H(+). The catalysed reaction is ATP + H2O = ADP + phosphate + H(+). It catalyses the reaction a 5'-end (5'-triphosphoguanosine)-ribonucleoside in mRNA + S-adenosyl-L-methionine = a 5'-end (N(7)-methyl 5'-triphosphoguanosine)-ribonucleoside in mRNA + S-adenosyl-L-homocysteine. It carries out the reaction a 5'-end (N(7)-methyl 5'-triphosphoguanosine)-ribonucleoside in mRNA + S-adenosyl-L-methionine = a 5'-end (N(7)-methyl 5'-triphosphoguanosine)-(2'-O-methyl-ribonucleoside) in mRNA + S-adenosyl-L-homocysteine + H(+). Plays a role in virus budding by binding to the cell membrane and gathering the viral RNA into a nucleocapsid that forms the core of a mature virus particle. During virus entry, may induce genome penetration into the host cytoplasm after hemifusion induced by the surface proteins. Can migrate to the cell nucleus where it modulates host functions. Overcomes the anti-viral effects of host EXOC1 by sequestering and degrading the latter through the proteasome degradation pathway. Its function is as follows. Inhibits RNA silencing by interfering with host Dicer. Functionally, prevents premature fusion activity of envelope proteins in trans-Golgi by binding to envelope protein E at pH6.0. After virion release in extracellular space, gets dissociated from E dimers. In terms of biological role, acts as a chaperone for envelope protein E during intracellular virion assembly by masking and inactivating envelope protein E fusion peptide. prM is the only viral peptide matured by host furin in the trans-Golgi network probably to avoid catastrophic activation of the viral fusion activity in acidic Golgi compartment prior to virion release. prM-E cleavage is inefficient, and many virions are only partially matured. These uncleaved prM would play a role in immune evasion. May play a role in virus budding. Exerts cytotoxic effects by activating a mitochondrial apoptotic pathway through M ectodomain. May display a viroporin activity. Its function is as follows. Binds to host cell surface receptor and mediates fusion between viral and cellular membranes. Envelope protein is synthesized in the endoplasmic reticulum in the form of heterodimer with protein prM. They play a role in virion budding in the ER, and the newly formed immature particle is covered with 60 spikes composed of heterodimer between precursor prM and envelope protein E. The virion is transported to the Golgi apparatus where the low pH causes dissociation of PrM-E heterodimers and formation of E homodimers. prM-E cleavage is inefficient, and many virions are only partially matured. These uncleaved prM would play a role in immune evasion. Functionally, involved in immune evasion, pathogenesis and viral replication. Once cleaved off the polyprotein, is targeted to three destinations: the viral replication cycle, the plasma membrane and the extracellular compartment. Essential for viral replication. Required for formation of the replication complex and recruitment of other non-structural proteins to the ER-derived membrane structures. Excreted as a hexameric lipoparticle that plays a role against host immune response. Antagonizing the complement function. Binds to the host macrophages and dendritic cells. Inhibits signal transduction originating from Toll-like receptor 3 (TLR3). In terms of biological role, involved in immune evasion, pathogenesis and viral replication. Once cleaved off the polyprotein, is targeted to three destinations: the viral replication cycle, the plasma membrane and the extracellular compartment. Essential for viral replication. Required for formation of the replication complex and recruitment of other non-structural proteins to the ER-derived membrane structures. Excreted as a hexameric lipoparticle that plays a role against host immune response. Antagonizing the complement function. Binds to the host macrophages and dendritic cells. Inhibits signal transduction originating from Toll-like receptor 3 (TLR3). Mediates complement activation, which may contribute to the pathogenesis of the vascular leakage that occurs in severe dengue disease. Activates autophagy through the AMPK/ERK/mTOR signaling pathway. Mechanistically, acts as the assembly platform for STK11-AMPK interactions and promotes STK11-AMPK interactions. In turn, promotes phosphorylation of the AMPK kinase structural domain and activates AMPK, thereby positively regulating the AMPK/ERK/mTOR signaling pathway and inducing autophagy. Component of the viral RNA replication complex that functions in virion assembly and antagonizes the host immune response. Its function is as follows. Required cofactor for the serine protease function of NS3. May have membrane-destabilizing activity and form viroporins. Functionally, displays three enzymatic activities: serine protease, NTPase and RNA helicase. NS3 serine protease, in association with NS2B, performs its autocleavage and cleaves the polyprotein at dibasic sites in the cytoplasm: C-prM, NS2A-NS2B, NS2B-NS3, NS3-NS4A, NS4A-2K and NS4B-NS5. NS3 RNA helicase binds RNA and unwinds dsRNA in the 3' to 5' direction. In terms of biological role, regulates the ATPase activity of the NS3 helicase activity. NS4A allows NS3 helicase to conserve energy during unwinding. Plays a role in the inhibition of the host innate immune response. Interacts with host MAVS and thereby prevents the interaction between RIGI and MAVS. In turn, IFN-beta production is impaired. Interacts with host AUP1 which mediates induction of lipophagy in host cells and facilitates production of virus progeny particles. Functions as a signal peptide for NS4B and is required for the interferon antagonism activity of the latter. Its function is as follows. Induces the formation of ER-derived membrane vesicles where the viral replication takes place. Inhibits interferon (IFN)-induced host STAT1 phosphorylation and nuclear translocation, thereby preventing the establishment of cellular antiviral state by blocking the IFN-alpha/beta pathway. Functionally, replicates the viral (+) and (-) RNA genome, and performs the capping of genomes in the cytoplasm. NS5 methylates viral RNA cap at guanine N-7 and ribose 2'-O positions. Besides its role in RNA genome replication, also prevents the establishment of cellular antiviral state by blocking the interferon-alpha/beta (IFN-alpha/beta) signaling pathway. Inhibits host TYK2 and STAT2 phosphorylation, thereby preventing activation of JAK-STAT signaling pathway. May reduce immune responses by preventing the recruitment of the host PAF1 complex to interferon-responsive genes. This is Genome polyprotein from Aedes aegypti (Yellowfever mosquito).